Reading from the N-terminus, the 342-residue chain is Holliday junction branch migration complex subunit RuvB (342 aa).

Residues 1-179 (MTNILSPEKS…FGIPMRLNFY (179 aa)) are large ATPase domain (RuvB-L). ATP is bound by residues I18, R19, G60, K63, T64, T65, 126–128 (EDF), R169, Y179, and R216. T64 contacts Mg(2+). Positions 180–250 (NTGELKKVLN…ISDFGLNRLE (71 aa)) are small ATPAse domain (RuvB-S). Residues 253 to 342 (RIGLDSNDYR…HQFNIFNENE (90 aa)) form a head domain (RuvB-H) region. DNA-binding residues include R289, R308, and R313.

The protein belongs to the RuvB family. In terms of assembly, homohexamer. Forms an RuvA(8)-RuvB(12)-Holliday junction (HJ) complex. HJ DNA is sandwiched between 2 RuvA tetramers; dsDNA enters through RuvA and exits via RuvB. An RuvB hexamer assembles on each DNA strand where it exits the tetramer. Each RuvB hexamer is contacted by two RuvA subunits (via domain III) on 2 adjacent RuvB subunits; this complex drives branch migration. In the full resolvosome a probable DNA-RuvA(4)-RuvB(12)-RuvC(2) complex forms which resolves the HJ.

It localises to the cytoplasm. It carries out the reaction ATP + H2O = ADP + phosphate + H(+). Its function is as follows. The RuvA-RuvB-RuvC complex processes Holliday junction (HJ) DNA during genetic recombination and DNA repair, while the RuvA-RuvB complex plays an important role in the rescue of blocked DNA replication forks via replication fork reversal (RFR). RuvA specifically binds to HJ cruciform DNA, conferring on it an open structure. The RuvB hexamer acts as an ATP-dependent pump, pulling dsDNA into and through the RuvAB complex. RuvB forms 2 homohexamers on either side of HJ DNA bound by 1 or 2 RuvA tetramers; 4 subunits per hexamer contact DNA at a time. Coordinated motions by a converter formed by DNA-disengaged RuvB subunits stimulates ATP hydrolysis and nucleotide exchange. Immobilization of the converter enables RuvB to convert the ATP-contained energy into a lever motion, pulling 2 nucleotides of DNA out of the RuvA tetramer per ATP hydrolyzed, thus driving DNA branch migration. The RuvB motors rotate together with the DNA substrate, which together with the progressing nucleotide cycle form the mechanistic basis for DNA recombination by continuous HJ branch migration. Branch migration allows RuvC to scan DNA until it finds its consensus sequence, where it cleaves and resolves cruciform DNA. This Rickettsia conorii (strain ATCC VR-613 / Malish 7) protein is Holliday junction branch migration complex subunit RuvB.